We begin with the raw amino-acid sequence, 398 residues long: 4-hydroxy-3-methylbut-2-enyl diphosphate reductase (398 aa).

Cys-66 contributes to the [4Fe-4S] cluster binding site. His-96 serves as a coordination point for (2E)-4-hydroxy-3-methylbut-2-enyl diphosphate. His-96 provides a ligand contact to dimethylallyl diphosphate. His-96 provides a ligand contact to isopentenyl diphosphate. A [4Fe-4S] cluster-binding site is contributed by Cys-157. Residue His-185 participates in (2E)-4-hydroxy-3-methylbut-2-enyl diphosphate binding. His-185 provides a ligand contact to dimethylallyl diphosphate. Residue His-185 participates in isopentenyl diphosphate binding. Glu-187 serves as the catalytic Proton donor. Thr-250 contributes to the (2E)-4-hydroxy-3-methylbut-2-enyl diphosphate binding site. A [4Fe-4S] cluster-binding site is contributed by Cys-288. Residues Ser-317, Ser-318, Asn-319, and Ser-379 each coordinate (2E)-4-hydroxy-3-methylbut-2-enyl diphosphate. The dimethylallyl diphosphate site is built by Ser-317, Ser-318, Asn-319, and Ser-379. Positions 317, 318, 319, and 379 each coordinate isopentenyl diphosphate.

It belongs to the IspH family. [4Fe-4S] cluster serves as cofactor.

It catalyses the reaction isopentenyl diphosphate + 2 oxidized [2Fe-2S]-[ferredoxin] + H2O = (2E)-4-hydroxy-3-methylbut-2-enyl diphosphate + 2 reduced [2Fe-2S]-[ferredoxin] + 2 H(+). The catalysed reaction is dimethylallyl diphosphate + 2 oxidized [2Fe-2S]-[ferredoxin] + H2O = (2E)-4-hydroxy-3-methylbut-2-enyl diphosphate + 2 reduced [2Fe-2S]-[ferredoxin] + 2 H(+). It functions in the pathway isoprenoid biosynthesis; dimethylallyl diphosphate biosynthesis; dimethylallyl diphosphate from (2E)-4-hydroxy-3-methylbutenyl diphosphate: step 1/1. Its pathway is isoprenoid biosynthesis; isopentenyl diphosphate biosynthesis via DXP pathway; isopentenyl diphosphate from 1-deoxy-D-xylulose 5-phosphate: step 6/6. Catalyzes the conversion of 1-hydroxy-2-methyl-2-(E)-butenyl 4-diphosphate (HMBPP) into a mixture of isopentenyl diphosphate (IPP) and dimethylallyl diphosphate (DMAPP). Acts in the terminal step of the DOXP/MEP pathway for isoprenoid precursor biosynthesis. The protein is 4-hydroxy-3-methylbut-2-enyl diphosphate reductase of Prochlorococcus marinus (strain MIT 9313).